The following is a 902-amino-acid chain: Glycogen phosphorylase (902 aa).

The disordered stretch occupies residues 1 to 21 (MPPASTSTTNDMITEEPTSPH). At Thr31 the chain carries Phosphothreonine. Ser333 carries the post-translational modification Phosphoserine. Lys751 carries the post-translational modification N6-(pyridoxal phosphate)lysine.

This sequence belongs to the glycogen phosphorylase family. Homodimer. Pyridoxal 5'-phosphate is required as a cofactor.

It localises to the cytoplasm. The protein resides in the cytosol. It carries out the reaction [(1-&gt;4)-alpha-D-glucosyl](n) + phosphate = [(1-&gt;4)-alpha-D-glucosyl](n-1) + alpha-D-glucose 1-phosphate. Activated by phosphorylation of Thr-31. Functionally, phosphorylase is an important allosteric enzyme in carbohydrate metabolism. Enzymes from different sources differ in their regulatory mechanisms and in their natural substrates. However, all known phosphorylases share catalytic and structural properties. The sequence is that of Glycogen phosphorylase (GPH1) from Saccharomyces cerevisiae (strain ATCC 204508 / S288c) (Baker's yeast).